Here is a 345-residue protein sequence, read N- to C-terminus: Phosphoribosylformylglycinamidine cyclo-ligase (345 aa).

Belongs to the AIR synthase family.

Its subcellular location is the cytoplasm. It catalyses the reaction 2-formamido-N(1)-(5-O-phospho-beta-D-ribosyl)acetamidine + ATP = 5-amino-1-(5-phospho-beta-D-ribosyl)imidazole + ADP + phosphate + H(+). It functions in the pathway purine metabolism; IMP biosynthesis via de novo pathway; 5-amino-1-(5-phospho-D-ribosyl)imidazole from N(2)-formyl-N(1)-(5-phospho-D-ribosyl)glycinamide: step 2/2. The polypeptide is Phosphoribosylformylglycinamidine cyclo-ligase (Prochlorococcus marinus (strain MIT 9211)).